The sequence spans 56 residues: Large ribosomal subunit protein bL32 (56 aa).

The segment at 1 to 34 (MAVQQNKKSRSKRGMRRSHDSLSTAQLSVDATSG) is disordered. The segment covering 7–16 (KKSRSKRGMR) has biased composition (basic residues). Over residues 21 to 31 (SLSTAQLSVDA) the composition is skewed to polar residues.

It belongs to the bacterial ribosomal protein bL32 family.

This chain is Large ribosomal subunit protein bL32, found in Shewanella frigidimarina (strain NCIMB 400).